The primary structure comprises 623 residues: uncharacterized protein (623 aa).

Positions 256-351 (AEEKLLSKNK…EEIHGLKKKN (96 aa)) form a coiled coil. 2 disordered regions span residues 417-485 (NRRN…SPSS) and 497-536 (ALSS…ECAT). The span at 422-431 (LESVPFNTLS) shows a compositional bias: polar residues. Residues 452–481 (ELKKPAESYGDETKKPNQHNKDGSIDEKPK) show a composition bias toward basic and acidic residues.

This is an uncharacterized protein from Arabidopsis thaliana (Mouse-ear cress).